The following is a 450-amino-acid chain: uncharacterized protein (450 aa).

Residue lysine 283 is modified to N6-(pyridoxal phosphate)lysine.

This sequence belongs to the class-III pyridoxal-phosphate-dependent aminotransferase family. Pyridoxal 5'-phosphate serves as cofactor.

In terms of biological role, essential for glycerol catabolism. This is an uncharacterized protein from Bacillus subtilis (strain 168).